The primary structure comprises 502 residues: MSIRAEEISALIKQQIENYQSEIEVSDVGTVIQVGDGIARAHGLDNVMAGELVEFSNGVMGLAQNLEENNVGIIILGPYTEIREGDEVRRTGRIMQVPVGKELIGRVVNPLGQPVDGLGPINTTNTRPIESPAPGVMDRKSVHEPLQTGIKAIDALVPIGRGQRELIIGDRQTGKTAVALDTIINQKDEDMICIYVAIGQKESTVRNVVETLRKHGALEYTIVVTASASQPAPLLYLAPYAGVTMGEEFMYNGKHVLVVYDDLSKQAAAYRELSLLLRRPPGREAYPGDVFYLHSRLLERAAKLSDAKGGGSLTALPFIETQAGDVSAYIPTNVISITDGQIFLQSDLFFSGVRPAIDAGTSVSRVGGSAQIKAMSKVSGTLRLDLASYRELEAFAQFGSDLDKATQAKLNRGARTVEVLKQGLHKPLRVEKQVIILYALTRGFLDDIPVVDITRFEEEFHAWLDSNATDLLEEIRTTKKLADDDKFAAAINGFKKVFVASE.

Residues 115–135 (VDGLGPINTTNTRPIESPAPG) are disordered. Residue 169 to 176 (GDRQTGKT) participates in ATP binding.

The protein belongs to the ATPase alpha/beta chains family. F-type ATPases have 2 components, CF(1) - the catalytic core - and CF(0) - the membrane proton channel. CF(1) has five subunits: alpha(3), beta(3), gamma(1), delta(1), epsilon(1). CF(0) has three main subunits: a(1), b(2) and c(9-12). The alpha and beta chains form an alternating ring which encloses part of the gamma chain. CF(1) is attached to CF(0) by a central stalk formed by the gamma and epsilon chains, while a peripheral stalk is formed by the delta and b chains.

The protein resides in the cell membrane. The catalysed reaction is ATP + H2O + 4 H(+)(in) = ADP + phosphate + 5 H(+)(out). Functionally, produces ATP from ADP in the presence of a proton gradient across the membrane. The alpha chain is a regulatory subunit. This Bacillus anthracis (strain A0248) protein is ATP synthase subunit alpha.